We begin with the raw amino-acid sequence, 718 residues long: SANT and BTB domain regulator of class switch recombination (718 aa).

One can recognise an SANT domain in the interval 21–59 (DMILYPLIGIPQTINWETIARLVPGLTPKECAKRFDELK). The segment covering 118–134 (ASTRNCSSESENCTTHN) has biased composition (polar residues). A disordered region spans residues 118–142 (ASTRNCSSESENCTTHNGGEMTEES). The BTB domain maps to 147-255 (MVIHVCDEAK…QCIQYCHKNM (109 aa)). Residues 555–576 (SEEEEYTTGSEVTEDEVGDEEE) show a composition bias toward acidic residues. Disordered regions lie at residues 555 to 622 (SEEE…SPFV) and 692 to 718 (SVPV…GRPA). The span at 580-595 (KQRKKEKPKKFTRQPK) shows a compositional bias: basic residues. A compositionally biased stretch (basic and acidic residues) spans 604-615 (QRKEKALEKSAS).

Belongs to the KIAA1841 family. In terms of assembly, homodimer. Interacts (via the BTB domain) with HDAC1 and NCOR2.

Functionally, negatively regulates class switch recombination or isotype switching in splenic B-cells. The polypeptide is SANT and BTB domain regulator of class switch recombination (Homo sapiens (Human)).